The primary structure comprises 265 residues: Glutamate racemase (265 aa).

Substrate-binding positions include 10-11 and 42-43; these read DS and YG. C73 serves as the catalytic Proton donor/acceptor. 74 to 75 contacts substrate; sequence NT. Residue C183 is the Proton donor/acceptor of the active site. Position 184–185 (184–185) interacts with substrate; sequence TH.

Belongs to the aspartate/glutamate racemases family.

It carries out the reaction L-glutamate = D-glutamate. It functions in the pathway cell wall biogenesis; peptidoglycan biosynthesis. Functionally, provides the (R)-glutamate required for cell wall biosynthesis. This chain is Glutamate racemase, found in Corynebacterium diphtheriae (strain ATCC 700971 / NCTC 13129 / Biotype gravis).